A 565-amino-acid polypeptide reads, in one-letter code: MFPIIILISFSFTFLFASVTSGAGGVTNLSTCLINHNVHNFSIYPTKNDQSSSNYFNLLDFSLQNLRFAASYMPKPTVIILPNSKEELVSTILCCRQTSYEIRVRCGGHSYEGTSYVSFDGSPFVIVDLMKLDDVSVDLDSETAWAQGGATIGQIYYAISRVSDVHAFSAGSGPTVGSGGHISGGGFGLMSRKFGLAADSVVDALLIDAEGRLLDRKAMGEDVFWAIRGGGGGNWGIIYAWKIRLLKVPKIVTTCMIYRPGSKQYVAQLLQKWQIVTPNLADDFTLGVLMRPIDLRADMNYGNTTPIETFPQFNALYLGPKTEAVSILNEAFPELDAKNDDAKEMTWIESALFFSELDNVFGNSSDDISRLKERYMDAKTFFKGKSDFVKTPFSMDAMMTALVELEKNPKSFLVFDPYGGVMDKISDQAIAFPHRKGNLFAVQYYAFWNEEDDAKSNEYIEWTRGFYNKMAPFVSSSPRGAYINYLDMDLGVNMDDDYLLRNASSRSSSSSVDAVERARAWGEMYFLHNYDRLVKAKTQIDPLNVFRHEQSIPPMLGSTQEHSSE.

Positions 1-17 are cleaved as a signal peptide; sequence MFPIIILISFSFTFLFA. 2 N-linked (GlcNAc...) asparagine glycosylation sites follow: Asn28 and Asn40. The cysteines at positions 32 and 94 are disulfide-linked. An FAD-binding PCMH-type domain is found at 72-248; that stretch reads YMPKPTVIIL…YAWKIRLLKV (177 aa). His109 carries the pros-8alpha-FAD histidine modification. 2 N-linked (GlcNAc...) asparagine glycosylation sites follow: Asn363 and Asn502.

Belongs to the oxygen-dependent FAD-linked oxidoreductase family. It depends on FAD as a cofactor.

It localises to the vacuole. It participates in alkaloid biosynthesis; nicotine biosynthesis. Functionally, involved in the biosynthesis of pyridine alkaloid natural products, leading mainly to the production of anabasine, anatabine, nicotine and nornicotine, effective deterrents against herbivores with antiparasitic and pesticide properties (neurotoxins); nornicotine serves as the precursor in the synthesis of the carcinogen compound N'-nitrosonornicotine (NNN). Catalyzes a late oxidation step subsequent to the pyridine ring condensation reaction in the biosynthesis of alkaloids. This is Berberine bridge enzyme-like C-2 from Nicotiana tabacum (Common tobacco).